The chain runs to 170 residues: Crossover junction endodeoxyribonuclease RuvC (170 aa).

Active-site residues include D9, E70, and D145. Positions 9, 70, and 145 each coordinate Mg(2+).

This sequence belongs to the RuvC family. In terms of assembly, homodimer which binds Holliday junction (HJ) DNA. The HJ becomes 2-fold symmetrical on binding to RuvC with unstacked arms; it has a different conformation from HJ DNA in complex with RuvA. In the full resolvosome a probable DNA-RuvA(4)-RuvB(12)-RuvC(2) complex forms which resolves the HJ. The cofactor is Mg(2+).

Its subcellular location is the cytoplasm. The catalysed reaction is Endonucleolytic cleavage at a junction such as a reciprocal single-stranded crossover between two homologous DNA duplexes (Holliday junction).. Functionally, the RuvA-RuvB-RuvC complex processes Holliday junction (HJ) DNA during genetic recombination and DNA repair. Endonuclease that resolves HJ intermediates. Cleaves cruciform DNA by making single-stranded nicks across the HJ at symmetrical positions within the homologous arms, yielding a 5'-phosphate and a 3'-hydroxyl group; requires a central core of homology in the junction. The consensus cleavage sequence is 5'-(A/T)TT(C/G)-3'. Cleavage occurs on the 3'-side of the TT dinucleotide at the point of strand exchange. HJ branch migration catalyzed by RuvA-RuvB allows RuvC to scan DNA until it finds its consensus sequence, where it cleaves and resolves the cruciform DNA. The polypeptide is Crossover junction endodeoxyribonuclease RuvC (Chlamydia trachomatis serovar A (strain ATCC VR-571B / DSM 19440 / HAR-13)).